The following is a 107-amino-acid chain: Putative regulatory protein BCG9842_A0044 (107 aa).

The protein belongs to the RemA family.

The chain is Putative regulatory protein BCG9842_A0044 from Bacillus cereus (strain G9842).